Consider the following 209-residue polypeptide: Ribosome maturation factor RimM (209 aa).

Positions 1-28 (MARRPQRPAPSGRAGAGRGAAGAAPPGP) are disordered. The PRC barrel domain occupies 123–197 (EDEFFTADLV…RVTIAPPEDL (75 aa)).

The protein belongs to the RimM family. Binds ribosomal protein uS19.

It localises to the cytoplasm. In terms of biological role, an accessory protein needed during the final step in the assembly of 30S ribosomal subunit, possibly for assembly of the head region. Essential for efficient processing of 16S rRNA. May be needed both before and after RbfA during the maturation of 16S rRNA. It has affinity for free ribosomal 30S subunits but not for 70S ribosomes. The chain is Ribosome maturation factor RimM from Methylobacterium sp. (strain 4-46).